A 3343-amino-acid polypeptide reads, in one-letter code: Cadherin-3 (3343 aa).

Positions 1 to 26 are cleaved as a signal peptide; that stretch reads MTIRIFFSIFLLNHLIFFHLFNFTHQ. Asparagine 22 is a glycosylation site (N-linked (GlcNAc...) asparagine). Residues 27 to 3228 lie on the Extracellular side of the membrane; that stretch reads FSEETIKFSV…LFSNFSNTTT (3202 aa). 3 consecutive Cadherin domains span residues 28–117, 118–229, and 242–330; these read SEET…SPIF, PIDV…PPNF, and PNTK…EPNI. Residues asparagine 149, asparagine 250, asparagine 288, asparagine 369, asparagine 467, and asparagine 612 are each glycosylated (N-linked (GlcNAc...) asparagine). The region spanning 632-738 is the Cadherin 4 domain; that stretch reads ICQITEIHVL…EDVNDNVPKF (107 aa). Asparagine 752, asparagine 806, asparagine 941, asparagine 966, asparagine 970, asparagine 985, asparagine 1042, asparagine 1335, asparagine 1425, asparagine 1429, asparagine 1557, asparagine 1563, asparagine 1597, asparagine 1624, asparagine 1695, and asparagine 1702 each carry an N-linked (GlcNAc...) asparagine glycan. The Cadherin 5 domain occupies 1279-1368; it reads RENELMFEIE…ADVNDNKPKI (90 aa). 3 consecutive Cadherin domains span residues 1545 to 1648, 1676 to 1756, and 1757 to 1857; these read DKAA…APRF, AEDL…TPEF, and ELSS…HPMI. N-linked (GlcNAc...) asparagine glycosylation is found at asparagine 1895 and asparagine 1900. Cadherin domains follow at residues 1954–2045, 2046–2145, and 2146–2245; these read TVSV…SPRF, DQQL…NAPR, and FSRI…APIF. N-linked (GlcNAc...) asparagine glycans are attached at residues asparagine 2053, asparagine 2129, asparagine 2203, asparagine 2382, asparagine 2391, asparagine 2410, asparagine 2414, asparagine 2431, asparagine 2527, asparagine 2530, asparagine 2564, asparagine 2621, asparagine 2665, asparagine 2712, asparagine 2798, asparagine 2809, asparagine 2927, asparagine 2976, and asparagine 3045. The region spanning 3040–3205 is the Laminin G-like domain; the sequence is EISVRNGTSH…SSTGTSRNEC (166 aa). Cysteine 3172 and cysteine 3205 are joined by a disulfide. N-linked (GlcNAc...) asparagine glycans are attached at residues asparagine 3222 and asparagine 3225. A helical transmembrane segment spans residues 3229-3250; that stretch reads LILLITLALISLIGFSVCLLAI. At 3251–3343 the chain is on the cytoplasmic side; the sequence is RRRWRQKSPG…RDGHINMAYL (93 aa). The interval 3257–3277 is disordered; sequence KSPGDQKQTERSNGWTGHVMP.

As to expression, expressed in the anchor cell.

Its subcellular location is the cell membrane. It localises to the basolateral cell membrane. The protein localises to the cell junction. Cell adhesion protein involved in the control of epithelial morphogenesis. Together with metalloproteinase zmp-1 and hemicentin him-4, plays a role in anchor cell (AC) invasion during postembryonic vulval development. This is Cadherin-3 (cdh-3) from Caenorhabditis elegans.